We begin with the raw amino-acid sequence, 347 residues long: Uroporphyrinogen decarboxylase (347 aa).

Substrate-binding positions include 24 to 28 (RQAGR), aspartate 74, tyrosine 145, serine 200, and histidine 315.

This sequence belongs to the uroporphyrinogen decarboxylase family. Homodimer.

The protein localises to the cytoplasm. The catalysed reaction is uroporphyrinogen III + 4 H(+) = coproporphyrinogen III + 4 CO2. It functions in the pathway porphyrin-containing compound metabolism; protoporphyrin-IX biosynthesis; coproporphyrinogen-III from 5-aminolevulinate: step 4/4. Its function is as follows. Catalyzes the decarboxylation of four acetate groups of uroporphyrinogen-III to yield coproporphyrinogen-III. The sequence is that of Uroporphyrinogen decarboxylase from Hydrogenobaculum sp. (strain Y04AAS1).